A 346-amino-acid chain; its full sequence is Phosphate acyltransferase (346 aa).

It belongs to the PlsX family. Homodimer. Probably interacts with PlsY.

The protein localises to the cytoplasm. It catalyses the reaction a fatty acyl-[ACP] + phosphate = an acyl phosphate + holo-[ACP]. It participates in lipid metabolism; phospholipid metabolism. In terms of biological role, catalyzes the reversible formation of acyl-phosphate (acyl-PO(4)) from acyl-[acyl-carrier-protein] (acyl-ACP). This enzyme utilizes acyl-ACP as fatty acyl donor, but not acyl-CoA. The chain is Phosphate acyltransferase from Synechococcus elongatus (strain ATCC 33912 / PCC 7942 / FACHB-805) (Anacystis nidulans R2).